We begin with the raw amino-acid sequence, 316 residues long: Transaldolase (316 aa).

Lys-132 serves as the catalytic Schiff-base intermediate with substrate.

Belongs to the transaldolase family. Type 1 subfamily. Homodimer.

The protein localises to the cytoplasm. It catalyses the reaction D-sedoheptulose 7-phosphate + D-glyceraldehyde 3-phosphate = D-erythrose 4-phosphate + beta-D-fructose 6-phosphate. It functions in the pathway carbohydrate degradation; pentose phosphate pathway; D-glyceraldehyde 3-phosphate and beta-D-fructose 6-phosphate from D-ribose 5-phosphate and D-xylulose 5-phosphate (non-oxidative stage): step 2/3. Transaldolase is important for the balance of metabolites in the pentose-phosphate pathway. This is Transaldolase from Methylobacillus flagellatus (strain ATCC 51484 / DSM 6875 / VKM B-1610 / KT).